A 243-amino-acid polypeptide reads, in one-letter code: MKDTLFNESLNKRFCFDEKVAHVFDDMLERSIPYYHEMLNLGAYFIAQNLKENIYPKSLPKPLIYDLGCSTGNFFIALNRQIQQEIELVGIDNSMPMLKKAQEKLKDFNNARFECMDFLEVEFKEASAFSLLFVLQFVRPMQREVLLKKIYNSLALNGVLLVGEKIMSEDRILDKQMIELYYLYKQNQGYSHNEIAFKREALENVLVPYSLKENVALLESVGFKHVEALFKWVNFTLLVARKT.

S-adenosyl-L-methionine is bound by residues Tyr-35, 68–70 (GCS), 92–93 (DN), and Arg-199.

It belongs to the class I-like SAM-binding methyltransferase superfamily. Cx-SAM synthase family. As to quaternary structure, homodimer.

The catalysed reaction is prephenate + S-adenosyl-L-methionine = carboxy-S-adenosyl-L-methionine + 3-phenylpyruvate + H2O. Functionally, catalyzes the conversion of S-adenosyl-L-methionine (SAM) to carboxy-S-adenosyl-L-methionine (Cx-SAM). The sequence is that of Carboxy-S-adenosyl-L-methionine synthase from Helicobacter pylori (strain ATCC 700392 / 26695) (Campylobacter pylori).